Here is a 264-residue protein sequence, read N- to C-terminus: Regulator of cytoskeleton and endocytosis RVS161 (264 aa).

The region spanning 15–239 is the BAR domain; it reads ASVIVKDVDK…LDPASRDEYA (225 aa).

Its subcellular location is the cytoplasm. The protein resides in the cytoskeleton. Its function is as follows. Component of a cytoskeletal structure that is required for the formation of endocytic vesicles at the plasma membrane level. Plays an important role in virulence. The polypeptide is Regulator of cytoskeleton and endocytosis RVS161 (RVS161) (Candida albicans (strain SC5314 / ATCC MYA-2876) (Yeast)).